A 644-amino-acid chain; its full sequence is Polyglycine hydrolase (644 aa).

The first 23 residues, 1-23, serve as a signal peptide directing secretion; the sequence is MYTSRSLFSTLASCLSLATLVAS. N-linked (GlcNAc...) asparagine glycosylation is found at N100, N144, N159, N244, and N340. A disulfide bridge connects residues C149 and C183. S369 is a catalytic residue. Residues N389, N410, N443, and N486 are each glycosylated (N-linked (GlcNAc...) asparagine).

It belongs to the peptidase S12 family.

It localises to the secreted. The catalysed reaction is a glycyl-glycyl-[protein] + H2O = N-terminal glycyl-[protein] + [protein]-C-terminal glycine. Its activity is regulated as follows. Not inhibited by phenylmethylsulfonyl fluoride (PMSF; serine peptidase class S1 inhibitor), clavulanic acid (beta-lactamase inhibitor) or ampicillin (penicillin-binding protein (PBP) inhibitor). In terms of biological role, serine-type endopeptidase that cleaves Gly-Gly bonds in the polyglycine linker of host plant class IV chitinases to disrupt their chitin-binding, and thereby plays a role in lowering the defense responses of the host to the fungus. Degrades Z.mays Endochitinase A (CHIA). Has low proteolytic activity on Z.mays Endochitinase B (CHIB). The chain is Polyglycine hydrolase from Cochliobolus carbonum (strain 26-R-13) (Maize leaf spot fungus).